We begin with the raw amino-acid sequence, 101 residues long: Vacuolar ATPase assembly integral membrane protein VMA21 (101 aa).

Residues 1-25 (MERPDKAALNALQPPEFRNESSLAS) lie on the Cytoplasmic side of the membrane. A helical membrane pass occupies residues 26-46 (TLKTLLFFTALMITVPIGLYF). Residues 47 to 65 (TTKSYIFEGALGMSNRDSY) lie on the Lumenal side of the membrane. A helical membrane pass occupies residues 66–86 (FYAAIVAVVAVHVVLALFVYV). Over 87-101 (AWNEGSRQWREGKQD) the chain is Cytoplasmic.

The protein belongs to the VMA21 family. As to quaternary structure, associates with the V0 complex of the vacuolar ATPase (V-ATPase). Interacts with ATP6AP2.

It is found in the endoplasmic reticulum membrane. Its subcellular location is the endoplasmic reticulum-Golgi intermediate compartment membrane. It localises to the cytoplasmic vesicle. The protein resides in the COPII-coated vesicle membrane. Functionally, required for the assembly of the V0 complex of the vacuolar ATPase (V-ATPase) in the endoplasmic reticulum. The protein is Vacuolar ATPase assembly integral membrane protein VMA21 of Homo sapiens (Human).